The chain runs to 490 residues: Homoserine O-acetyltransferase (490 aa).

Residues 47–353 (NAILVCHALT…SQFGHDAFLI (307 aa)) form the AB hydrolase-1 domain. Ser-152 acts as the Nucleophile in catalysis. Arg-221 contacts substrate. Residues Asp-315 and His-348 contribute to the active site. Asp-349 is a binding site for substrate. 2 consecutive CBS domains span residues 375–432 (MNTQ…YTSL) and 436–490 (MSSQ…GRGP).

The protein belongs to the AB hydrolase superfamily. MetX family. As to quaternary structure, homodimer.

It is found in the cytoplasm. It catalyses the reaction L-homoserine + acetyl-CoA = O-acetyl-L-homoserine + CoA. Its pathway is amino-acid biosynthesis; L-methionine biosynthesis via de novo pathway; O-acetyl-L-homoserine from L-homoserine: step 1/1. Its function is as follows. Transfers an acetyl group from acetyl-CoA to L-homoserine, forming acetyl-L-homoserine. The sequence is that of Homoserine O-acetyltransferase from Methanosphaerula palustris (strain ATCC BAA-1556 / DSM 19958 / E1-9c).